A 132-amino-acid chain; its full sequence is Nucleoid-associated protein EspR (132 aa).

Positions 38–50 (ITMSAPYLSQLRS) form a DNA-binding region, H-T-H motif.

As to quaternary structure, homodimer. Binds DNA as a dimer of dimers.

It localises to the cytoplasm. The protein resides in the nucleoid. Its function is as follows. Virulence regulator that has both architectural and regulatory roles. Impacts cell wall functions and pathogenesis through regulation of multiple genes. In Mycobacterium tuberculosis (strain CDC 1551 / Oshkosh), this protein is Nucleoid-associated protein EspR.